The chain runs to 351 residues: N-acetyl-gamma-glutamyl-phosphate reductase (351 aa).

Residue C154 is part of the active site.

This sequence belongs to the NAGSA dehydrogenase family. Type 1 subfamily.

The protein localises to the cytoplasm. The enzyme catalyses N-acetyl-L-glutamate 5-semialdehyde + phosphate + NADP(+) = N-acetyl-L-glutamyl 5-phosphate + NADPH + H(+). It functions in the pathway amino-acid biosynthesis; L-arginine biosynthesis; N(2)-acetyl-L-ornithine from L-glutamate: step 3/4. In terms of biological role, catalyzes the NADPH-dependent reduction of N-acetyl-5-glutamyl phosphate to yield N-acetyl-L-glutamate 5-semialdehyde. This is N-acetyl-gamma-glutamyl-phosphate reductase from Prochlorococcus marinus (strain MIT 9312).